The sequence spans 259 residues: Dickkopf-related protein 2 (259 aa).

Residues 1 to 33 (MAALMRVKDSSRCLLLLAAVLMVESSQLGSSRA) form the signal peptide. The tract at residues 42-70 (LGGETPAQSANRSAGMNQGLAFGGSKKGK) is disordered. The segment covering 47–57 (PAQSANRSAGM) has biased composition (polar residues). N-linked (GlcNAc...) asparagine glycosylation is present at N52. Positions 78 to 127 (CSSDKECEVGRYCHSPHQGSSACMLCRRKKKRCHRDGMCCPGTRCNNGIC) are DKK-type Cys-1. Intrachain disulfides connect C183/C195, C189/C204, C194/C231, C214/C239, and C233/C256. The segment at 183–256 (CLRSSDCIDG…YSSKARLHVC (74 aa)) is DKK-type Cys-2.

This sequence belongs to the dickkopf family. As to quaternary structure, interacts with LRP5 and LRP6. In terms of processing, may be proteolytically processed by a furin-like protease.

It is found in the secreted. In terms of biological role, antagonizes canonical Wnt signaling by inhibiting LRP5/6 interaction with Wnt and by forming a ternary complex with the transmembrane protein KREMEN that promotes internalization of LRP5/6. DKKs play an important role in vertebrate development, where they locally inhibit Wnt regulated processes such as antero-posterior axial patterning, limb development, somitogenesis and eye formation. In the adult, Dkks are implicated in bone formation and bone disease, cancer and Alzheimer disease. In Mus musculus (Mouse), this protein is Dickkopf-related protein 2.